The primary structure comprises 495 residues: Serine/threonine protein phosphatase 2A 57 kDa regulatory subunit B' alpha isoform (495 aa).

A compositionally biased stretch (basic residues) spans 1–13 (MFKKIMKGANRKA). 2 disordered regions span residues 1–61 (MFKK…AATT) and 462–495 (QAKS…MITS). A compositionally biased stretch (polar residues) spans 49–61 (VPSSPNSMAAATT).

It belongs to the phosphatase 2A regulatory subunit B56 family. As to quaternary structure, PP2A consists of a common heteromeric enzyme, composed of a catalytic subunit (subunits C), a constant regulatory subunit (subunit A), and a variety of regulatory subunits such as subunits B (the R2/B/PR55/B55, R3/B''/PR72/PR130/PR59 and R5/B'/B56 families). Interacts with BZR1. Interacts with BRI1. Interacts with SRK2E/OST1. Expressed ubiquitously, higher levels in leaves.

It is found in the nucleus. It localises to the cytoplasm. Its function is as follows. The B regulatory subunit may modulate substrate selectivity and catalytic activity, and may also direct the localization of the catalytic enzyme to a particular subcellular compartment. Required for the formation of the PP2A holoenzyme that positively regulates brassinosteroid signaling by dephosphorylating and activating BZR1. The sequence is that of Serine/threonine protein phosphatase 2A 57 kDa regulatory subunit B' alpha isoform (B'ALPHA) from Arabidopsis thaliana (Mouse-ear cress).